The chain runs to 541 residues: Chaperonin GroEL (541 aa).

ATP-binding positions include 29–32, 86–90, Gly-413, 477–479, and Asp-493; these read TLGP, DGTTT, and DAL.

It belongs to the chaperonin (HSP60) family. Forms a cylinder of 14 subunits composed of two heptameric rings stacked back-to-back. Interacts with the co-chaperonin GroES.

Its subcellular location is the cytoplasm. It carries out the reaction ATP + H2O + a folded polypeptide = ADP + phosphate + an unfolded polypeptide.. In terms of biological role, together with its co-chaperonin GroES, plays an essential role in assisting protein folding. The GroEL-GroES system forms a nano-cage that allows encapsulation of the non-native substrate proteins and provides a physical environment optimized to promote and accelerate protein folding. In Clostridium beijerinckii (strain ATCC 51743 / NCIMB 8052) (Clostridium acetobutylicum), this protein is Chaperonin GroEL.